The primary structure comprises 258 residues: Aspartate/glutamate leucyltransferase (258 aa).

It belongs to the R-transferase family. Bpt subfamily.

It localises to the cytoplasm. It catalyses the reaction N-terminal L-glutamyl-[protein] + L-leucyl-tRNA(Leu) = N-terminal L-leucyl-L-glutamyl-[protein] + tRNA(Leu) + H(+). The enzyme catalyses N-terminal L-aspartyl-[protein] + L-leucyl-tRNA(Leu) = N-terminal L-leucyl-L-aspartyl-[protein] + tRNA(Leu) + H(+). In terms of biological role, functions in the N-end rule pathway of protein degradation where it conjugates Leu from its aminoacyl-tRNA to the N-termini of proteins containing an N-terminal aspartate or glutamate. This Rhizobium johnstonii (strain DSM 114642 / LMG 32736 / 3841) (Rhizobium leguminosarum bv. viciae) protein is Aspartate/glutamate leucyltransferase.